The primary structure comprises 213 residues: MIAAPDRTPLTREFFARPVLDVAPDLLGRVLVRTTPDGPIELRVTEVEAYDGPSDPGSHAYRGRTARNGVMFGPPGHVYVYFTYGMWHCMNLVCGPEGRASAVLLRAGEIIEGAELARTRRLSARNDKELAKGPARLATALEVDRALDGTDACAPEGGPLTLLSGTPVPPDQVRNGPRTGVSGDGGVHPWRFWIDNDPTVSPYRAHTPRRRRT.

Residues 165–187 (GTPVPPDQVRNGPRTGVSGDGGV) form a disordered region.

The protein belongs to the DNA glycosylase MPG family.

This Streptomyces avermitilis (strain ATCC 31267 / DSM 46492 / JCM 5070 / NBRC 14893 / NCIMB 12804 / NRRL 8165 / MA-4680) protein is Putative 3-methyladenine DNA glycosylase.